Reading from the N-terminus, the 161-residue chain is uncharacterized protein (161 aa).

2 disordered regions span residues 1 to 67 (MNSN…IQNF) and 80 to 147 (DSHQ…KKKQ). A compositionally biased stretch (low complexity) spans 84-126 (NFNDNGFNNNNNNNNSNMNHNFSNQNNYNNNNNNNNNNNSNFN). Residues 135–147 (GTSSQVGNNKKKQ) show a composition bias toward polar residues.

This is an uncharacterized protein from Dictyostelium discoideum (Social amoeba).